We begin with the raw amino-acid sequence, 474 residues long: 3-isopropylmalate dehydratase large subunit (474 aa).

Positions 350, 411, and 414 each coordinate [4Fe-4S] cluster.

This sequence belongs to the aconitase/IPM isomerase family. LeuC type 1 subfamily. In terms of assembly, heterodimer of LeuC and LeuD. The cofactor is [4Fe-4S] cluster.

It catalyses the reaction (2R,3S)-3-isopropylmalate = (2S)-2-isopropylmalate. Its pathway is amino-acid biosynthesis; L-leucine biosynthesis; L-leucine from 3-methyl-2-oxobutanoate: step 2/4. Its function is as follows. Catalyzes the isomerization between 2-isopropylmalate and 3-isopropylmalate, via the formation of 2-isopropylmaleate. The protein is 3-isopropylmalate dehydratase large subunit of Hydrogenovibrio crunogenus (strain DSM 25203 / XCL-2) (Thiomicrospira crunogena).